The following is a 488-amino-acid chain: Protein nucleotidyltransferase YdiU (488 aa).

ATP is bound by residues glycine 91, glycine 93, arginine 94, lysine 114, aspartate 126, glycine 127, arginine 177, and arginine 184. Aspartate 253 (proton acceptor) is an active-site residue. Residues asparagine 254 and aspartate 263 each contribute to the Mg(2+) site. Aspartate 263 is an ATP binding site.

It belongs to the SELO family. The cofactor is Mg(2+). Mn(2+) serves as cofactor.

The enzyme catalyses L-seryl-[protein] + ATP = 3-O-(5'-adenylyl)-L-seryl-[protein] + diphosphate. It catalyses the reaction L-threonyl-[protein] + ATP = 3-O-(5'-adenylyl)-L-threonyl-[protein] + diphosphate. It carries out the reaction L-tyrosyl-[protein] + ATP = O-(5'-adenylyl)-L-tyrosyl-[protein] + diphosphate. The catalysed reaction is L-histidyl-[protein] + UTP = N(tele)-(5'-uridylyl)-L-histidyl-[protein] + diphosphate. The enzyme catalyses L-seryl-[protein] + UTP = O-(5'-uridylyl)-L-seryl-[protein] + diphosphate. It catalyses the reaction L-tyrosyl-[protein] + UTP = O-(5'-uridylyl)-L-tyrosyl-[protein] + diphosphate. Functionally, nucleotidyltransferase involved in the post-translational modification of proteins. It can catalyze the addition of adenosine monophosphate (AMP) or uridine monophosphate (UMP) to a protein, resulting in modifications known as AMPylation and UMPylation. The polypeptide is Protein nucleotidyltransferase YdiU (Bacillus cereus (strain ATCC 10987 / NRS 248)).